A 336-amino-acid polypeptide reads, in one-letter code: 4-hydroxythreonine-4-phosphate dehydrogenase (336 aa).

Residue T140 participates in substrate binding. A divalent metal cation is bound by residues H171, H216, and H271. 3 residues coordinate substrate: K279, N288, and R297.

Belongs to the PdxA family. In terms of assembly, homodimer. Zn(2+) is required as a cofactor. Requires Mg(2+) as cofactor. It depends on Co(2+) as a cofactor.

Its subcellular location is the cytoplasm. It carries out the reaction 4-(phosphooxy)-L-threonine + NAD(+) = 3-amino-2-oxopropyl phosphate + CO2 + NADH. The protein operates within cofactor biosynthesis; pyridoxine 5'-phosphate biosynthesis; pyridoxine 5'-phosphate from D-erythrose 4-phosphate: step 4/5. Functionally, catalyzes the NAD(P)-dependent oxidation of 4-(phosphooxy)-L-threonine (HTP) into 2-amino-3-oxo-4-(phosphooxy)butyric acid which spontaneously decarboxylates to form 3-amino-2-oxopropyl phosphate (AHAP). This chain is 4-hydroxythreonine-4-phosphate dehydrogenase, found in Erythrobacter litoralis (strain HTCC2594).